A 111-amino-acid chain; its full sequence is uncharacterized protein (111 aa).

2 helical membrane-spanning segments follow: residues 27–47 (IIVL…GYKF) and 80–100 (IFTG…ISAI).

Its subcellular location is the membrane. This is an uncharacterized protein from Acanthamoeba polyphaga (Amoeba).